We begin with the raw amino-acid sequence, 906 residues long: MPLRLDIKRKLTARSDRVKSVDLHPTEPWMLASLYNGSVCVWNHETQTLVKTFEVCDLPVRAAKFVARKNWVVTGADDMQIRVFNYNTLERVHMFEAHSDYIRCIAVHPTQPFILTSSDDMLIKLWDWDKKWSCSQVFEGHTHYVMQIVINPKDNNQFASASLDRTIKVWQLGSSSPNFTLEGHEKGVNCIDYYSGGDKPYLISGADDRLVKIWDYQNKTCVQTLEGHAQNVSCASFHPELPIIITGSEDGTVRIWHSSTYRLESTLNYGMERVWCVASLRGSNNVALGYDEGSIIVKLGREEPAMSMDANGKIIWAKHSEVQQANLKAMGDAEIKDGERLPLAVKDMGSCEIYPQTIQHNPNGRFVVVCGDGEYIIYTAMALRNKSFGSAQEFAWAHDSSEYAIRESNSIVKIFKNFKEKKSFKPDFGAESIYGGFLLGVRSVNGLAFYDWDNTELIRRIEIQPKHIFWSDSGELVCIATEESFFILKYLSEKVLAAQETHEGVTEDGIEDAFEVLGEIQEIVKTGLWVGDCFIYTSSVNRLNYYVGGEIVTIAHLDRTMYLLGYIPKDNRLYLGDKELNIISYSLLVSVLEYQTAVMRRDFSMADKVLPTIPKEQRTRVAHFLEKQGFKQQALTVSTDPEHRFELALQLGELKIAYQLAVEAESEQKWKQLAELAISKCQFGLAQECLHHAQDYGGLLLLATASGNANMVNKLAEGAERDGKNNVAFMSYFLQGKVDACLELLIRTGRLPEAAFLARTYLPSQVSRVVKLWRENLSKVNQKAAESLADPTEYENLFPGLKEAFVVEEWVKETHADLWPAKQYPLVTPNEERNVMEEGKDFQPSRSTAQQELDGKPASPTPVIVASHTANKEEKSLLELEVDLDNLELEDIDTTDINLDEDILDD.

WD repeat units follow at residues alanine 13–threonine 52, valine 55–methionine 94, alanine 97–glutamine 136, glycine 140–threonine 180, glycine 183–threonine 224, and glycine 227–threonine 266. Lysine 627 carries the N6-acetyllysine modification. Residues glutamate 837–alanine 870 form a disordered region. Serine 859 carries the post-translational modification Phosphoserine. The residue at position 861 (threonine 861) is a Phosphothreonine. The stretch at alanine 866–aspartate 891 forms a coiled coil.

This sequence belongs to the WD repeat COPB2 family. Oligomeric complex that consists of at least the alpha, beta, beta', gamma, delta, epsilon and zeta subunits. Probably interacts with PEX11A. Interacts with SCYL1. Interacts with JAGN1.

Its subcellular location is the cytoplasm. It is found in the cytosol. The protein localises to the golgi apparatus membrane. The protein resides in the cytoplasmic vesicle. It localises to the COPI-coated vesicle membrane. Its function is as follows. The coatomer is a cytosolic protein complex that binds to dilysine motifs and reversibly associates with Golgi non-clathrin-coated vesicles, which further mediate biosynthetic protein transport from the ER, via the Golgi up to the trans Golgi network. Coatomer complex is required for budding from Golgi membranes, and is essential for the retrograde Golgi-to-ER transport of dilysine-tagged proteins. In mammals, the coatomer can only be recruited by membranes associated to ADP-ribosylation factors (ARFs), which are small GTP-binding proteins; the complex also influences the Golgi structural integrity, as well as the processing, activity, and endocytic recycling of LDL receptors. Functionally, this coatomer complex protein, essential for Golgi budding and vesicular trafficking, is a selective binding protein (RACK) for protein kinase C, epsilon type. It binds to Golgi membranes in a GTP-dependent manner. This is Coatomer subunit beta' (COPB2) from Homo sapiens (Human).